A 425-amino-acid chain; its full sequence is Adenylosuccinate synthetase (425 aa).

Residues 12–18 and 40–42 contribute to the GTP site; these read GDEGKGK and GHT. Catalysis depends on Asp13, which acts as the Proton acceptor. Mg(2+)-binding residues include Asp13 and Gly40. IMP is bound by residues 13-16, 38-41, Thr127, Arg141, Gln222, Thr237, and Arg301; these read DEGK and NAGH. His41 (proton donor) is an active-site residue. 297 to 303 lines the substrate pocket; it reads AVTGRPR. GTP-binding positions include Arg303, 329 to 331, and 411 to 413; these read KID and SVG.

It belongs to the adenylosuccinate synthetase family. As to quaternary structure, homodimer. Requires Mg(2+) as cofactor.

The protein resides in the cytoplasm. The catalysed reaction is IMP + L-aspartate + GTP = N(6)-(1,2-dicarboxyethyl)-AMP + GDP + phosphate + 2 H(+). It functions in the pathway purine metabolism; AMP biosynthesis via de novo pathway; AMP from IMP: step 1/2. Functionally, plays an important role in the de novo pathway of purine nucleotide biosynthesis. Catalyzes the first committed step in the biosynthesis of AMP from IMP. In Fusobacterium nucleatum, this protein is Adenylosuccinate synthetase.